Consider the following 453-residue polypeptide: tRNA modification GTPase MnmE (453 aa).

Residues Arg-22, Glu-79, and Lys-119 each contribute to the (6S)-5-formyl-5,6,7,8-tetrahydrofolate site. One can recognise a TrmE-type G domain in the interval 215 to 376 (GMKVVIAGRP…LRNHLKECMG (162 aa)). Asn-225 lines the K(+) pocket. GTP-binding positions include 225-230 (NAGKSS), 244-250 (TDIAGTT), 269-272 (DTAG), and 334-337 (NKAD). Ser-229 provides a ligand contact to Mg(2+). K(+)-binding residues include Thr-244, Ile-246, and Thr-249. Thr-250 is a binding site for Mg(2+). Lys-453 serves as a coordination point for (6S)-5-formyl-5,6,7,8-tetrahydrofolate.

It belongs to the TRAFAC class TrmE-Era-EngA-EngB-Septin-like GTPase superfamily. TrmE GTPase family. Homodimer. Heterotetramer of two MnmE and two MnmG subunits. K(+) serves as cofactor.

The protein resides in the cytoplasm. Its function is as follows. Exhibits a very high intrinsic GTPase hydrolysis rate. Involved in the addition of a carboxymethylaminomethyl (cmnm) group at the wobble position (U34) of certain tRNAs, forming tRNA-cmnm(5)s(2)U34. In Vibrio vulnificus (strain YJ016), this protein is tRNA modification GTPase MnmE.